Reading from the N-terminus, the 248-residue chain is Phycocyanobilin:ferredoxin oxidoreductase (248 aa).

This sequence belongs to the HY2 family.

The enzyme catalyses (2R,3Z)-phycocyanobilin + 4 oxidized [2Fe-2S]-[ferredoxin] = biliverdin IXalpha + 4 reduced [2Fe-2S]-[ferredoxin] + 4 H(+). Functionally, catalyzes the four-electron reduction of biliverdin IX-alpha (2-electron reduction at both the A and D rings); the reaction proceeds via an isolatable 2-electron intermediate, 181,182-dihydrobiliverdin. In Synechococcus elongatus (strain ATCC 33912 / PCC 7942 / FACHB-805) (Anacystis nidulans R2), this protein is Phycocyanobilin:ferredoxin oxidoreductase (pcyA).